A 193-amino-acid chain; its full sequence is Small COPII coat GTPase SAR1 (193 aa).

An STAR; SAR1-N-terminal activation recruitment. Required for the activation and subsequent recruitment to ER membrane motif is present at residues 3–5 (FLW). The interval 11–15 (VLNML) is mediates recruitment to ER membranes. D30 contributes to the Mg(2+) binding site. The GDP site is built by N31, A32, G33, K34, T35, and T36. N31 contributes to the GTP binding site. GTP is bound by residues G33, K34, T35, and T36. Residue D71 participates in Mg(2+) binding. GDP is bound by residues N130, K131, D133, V176, and L177. Residues N130, K131, D133, V176, and L177 each contribute to the GTP site.

It belongs to the small GTPase superfamily. SAR1 family. As to quaternary structure, homodimer; upon association with membrane. Part of the coat protein complex II/COPII, composed of SEC23/24 and SEC13/31 heterodimers, that it helps recruit and assemble on endoplasmic reticulum (ER) membranes at ER exit sites.

It is found in the endoplasmic reticulum membrane. It localises to the golgi apparatus. The protein localises to the golgi stack membrane. The protein resides in the cytoplasm. Its subcellular location is the cytosol. It carries out the reaction GTP + H2O = GDP + phosphate + H(+). With respect to regulation, small GTPases activation is mediated by guanine exchange factors (GEF), while inactivation through hydrolysis of the bound GTP is stimulated by GTPase activating proteins (GAP). Functionally, small GTPase that cycles between an active GTP-bound and an inactive GDP-bound state and mainly functions in vesicle-mediated endoplasmic reticulum (ER) to Golgi transport. The active GTP-bound form inserts into the endoplasmic reticulum membrane where it recruits the remainder of the coat protein complex II/COPII. The coat protein complex II assembling and polymerizing on endoplasmic reticulum membrane is responsible for both the sorting of cargos and the deformation and budding of membranes into vesicles destined to the Golgi. Plays a role in transporting the tyrosine kinase receptor let-23 from the endoplasmic reticulum to the plasma membrane of vulval precursor cells. The polypeptide is Small COPII coat GTPase SAR1 (Caenorhabditis elegans).